The chain runs to 385 residues: GDSL esterase/lipase At5g08460 (385 aa).

Positions 1-35 (MHDSEIFKFKDMMMMSCTVQTLVLVPWFLVVFVLA) are cleaved as a signal peptide. Ser-56 serves as the catalytic Nucleophile. N-linked (GlcNAc...) asparagine glycans are attached at residues Asn-218 and Asn-285. Catalysis depends on residues Asp-350 and His-353. Asn-368 and Asn-378 each carry an N-linked (GlcNAc...) asparagine glycan.

Belongs to the 'GDSL' lipolytic enzyme family.

It is found in the secreted. The polypeptide is GDSL esterase/lipase At5g08460 (Arabidopsis thaliana (Mouse-ear cress)).